Consider the following 418-residue polypeptide: MRLNSSAPGTPGTPAADPFQRAQAGLEEALLAPGFGNASGNASERVLAAPSSELDVNTDIYSKVLVTAVYLALFVVGTVGNTVTAFTLARKKSLQSLQSTVHYHLGSLALSDLLTLLLAMPVELYNFIWVHHPWAFGDAGCRGYYFLRDACTYATALNVASLSVERYLAICHPFKAKTLMSRSRTKKFISAIWLASALLAVPMLFTMGEQNRSADGQHAGGLVCTPTIHTATVKVVIQVNTFMSFIFPMVVISVLNTIIANKLTVMVRQAAEQGQVCTVGGEHSTFSMAIEPGRVQALRHGVRVLRAVVIAFVVCWLPYHVRRLMFCYISDEQWTPFLYDFYHYFYMVTNALFYVSSTINPILYNLVSANFRHIFLATLACLCPVWRRRRKRPAFSRKADSVSSNHTLSSNATRETLY.

Residues Met1–Thr67 are Extracellular-facing. N-linked (GlcNAc...) asparagine glycosylation is found at Asn4, Asn37, and Asn41. Residues Ala68–Leu88 traverse the membrane as a helical segment. At Ala89–His102 the chain is on the cytoplasmic side. A helical membrane pass occupies residues Tyr103 to Val122. At Glu123 to Arg142 the chain is on the extracellular side. Cysteines 141 and 224 form a disulfide. Residues Gly143 to Val164 form a helical membrane-spanning segment. Residues Glu165–Arg184 are Cytoplasmic-facing. The helical transmembrane segment at Thr185–Phe205 threads the bilayer. Topologically, residues Thr206–Lys234 are extracellular. Residues Val235–Ile259 traverse the membrane as a helical segment. The Cytoplasmic segment spans residues Ala260–Arg303. A helical transmembrane segment spans residues Val304–Met325. The interval Val321–Tyr344 is neurotensin binding. Topologically, residues Phe326–His343 are extracellular. The chain crosses the membrane as a helical span at residues Tyr344–Tyr364. At Asn365–Tyr418 the chain is on the cytoplasmic side. Residues Cys381 and Cys383 are each lipidated (S-palmitoyl cysteine).

The protein belongs to the G-protein coupled receptor 1 family. Neurotensin receptor subfamily. NTSR1 sub-subfamily. In terms of assembly, interacts (palmitoylated form) with GNA11. N-glycosylated. Post-translationally, palmitoylated; this is required for normal localization at membrane rafts and normal GNA11-mediated activation of down-stream signaling cascades. The palmitoylation level increases in response to neurotensin treatment. Expressed in prostate (at protein level). Detected in colon and peripheral blood mononuclear cells. Detected at very low levels in brain.

The protein localises to the cell membrane. The protein resides in the membrane raft. Its function is as follows. G-protein coupled receptor for the tridecapeptide neurotensin (NTS). Signaling is effected via G proteins that activate a phosphatidylinositol-calcium second messenger system. Signaling leads to the activation of downstream MAP kinases and protects cells against apoptosis. This Homo sapiens (Human) protein is Neurotensin receptor type 1 (NTSR1).